We begin with the raw amino-acid sequence, 188 residues long: dCTP deaminase (188 aa).

DCTP is bound by residues 111–116 (KSTYAR), 135–137 (TLE), Gln-156, Tyr-170, and Gln-180. The active-site Proton donor/acceptor is the Glu-137.

The protein belongs to the dCTP deaminase family. In terms of assembly, homotrimer.

It catalyses the reaction dCTP + H2O + H(+) = dUTP + NH4(+). The protein operates within pyrimidine metabolism; dUMP biosynthesis; dUMP from dCTP (dUTP route): step 1/2. Its function is as follows. Catalyzes the deamination of dCTP to dUTP. This Nitrosococcus oceani (strain ATCC 19707 / BCRC 17464 / JCM 30415 / NCIMB 11848 / C-107) protein is dCTP deaminase.